We begin with the raw amino-acid sequence, 305 residues long: Dihydroorotate dehydrogenase B (NAD(+)), catalytic subunit (305 aa).

FMN is bound by residues Ser-21 and 45 to 46 (KA). Residues Lys-45 and 69–73 (NAIGL) contribute to the substrate site. FMN-binding residues include Asn-99 and Asn-127. Asn-127 is a substrate binding site. The Nucleophile role is filled by Cys-130. 2 residues coordinate FMN: Lys-165 and Ile-190. Substrate is bound at residue 191 to 192 (NT). Residues Gly-216, 242–243 (GG), and 264–265 (GT) each bind FMN.

It belongs to the dihydroorotate dehydrogenase family. Type 1 subfamily. Heterotetramer of 2 PyrK and 2 PyrD type B subunits. The cofactor is FMN.

The protein localises to the cytoplasm. The enzyme catalyses (S)-dihydroorotate + NAD(+) = orotate + NADH + H(+). It participates in pyrimidine metabolism; UMP biosynthesis via de novo pathway; orotate from (S)-dihydroorotate (NAD(+) route): step 1/1. Its function is as follows. Catalyzes the conversion of dihydroorotate to orotate with NAD(+) as electron acceptor. This Staphylococcus carnosus (strain TM300) protein is Dihydroorotate dehydrogenase B (NAD(+)), catalytic subunit (pyrD).